The sequence spans 143 residues: Transcriptional regulator MraZ (143 aa).

2 consecutive SpoVT-AbrB domains span residues 5–47 (EYRH…TQEE) and 76–119 (ATEC…SEDR).

Belongs to the MraZ family. As to quaternary structure, forms oligomers.

The protein resides in the cytoplasm. Its subcellular location is the nucleoid. This Ligilactobacillus salivarius (strain UCC118) (Lactobacillus salivarius) protein is Transcriptional regulator MraZ.